We begin with the raw amino-acid sequence, 609 residues long: Sodium- and chloride-dependent GABA transporter 2 (609 aa).

Over residues 1 to 13 the composition is skewed to polar residues; sequence MDSRASGTASNGE. Residues 1-23 are disordered; sequence MDSRASGTASNGETKPVYPVMEK. Residues 1-40 are Cytoplasmic-facing; that stretch reads MDSRASGTASNGETKPVYPVMEKEEEEGTLERGHWNNKME. Helical transmembrane passes span 41–61, 68–88, and 121–141; these read FVLSVAGEIIGLGNVWRFPYL, GAFFIPYLVFLFTCGVPVFLL, and IVILLNVYYIIVLAWALFYLF. Topologically, residues 142–206 are extracellular; sequence SSFTIDLPWG…GIQHLGALRW (65 aa). Cys153 and Cys162 are disulfide-bonded. N-linked (GlcNAc...) asparagine glycans are attached at residues Asn169 and Asn173. 2 consecutive transmembrane segments (helical) span residues 207 to 227 and 233 to 253; these read ELALCLLLAWVICYFCIWKGV and VVYFTATFPYLMLVVLLIRGV. The N-linked (GlcNAc...) asparagine glycan is linked to Asn269. The next 7 membrane-spanning stretches (helical) occupy residues 282–302, 319–339, 366–386, 418–438, 453–473, 490–510, and 528–548; these read AGTQIFFSFAICLGCLTALGS, FLNSGTSFVAGFAIFSILGFM, VVMLPFSPLWACCFFFMVVLL, VLILGVSVVSFLVGLVMLTEG, GMCLLFVAIFESLCVAWVYGA, PLIKYCWLFLTPAVCTATFLF, and WWGDALGWLLALSSMVCIPAW. At 549–609 the chain is on the cytoplasmic side; it reads SLYRLGTLKG…LRLTELESHC (61 aa). Thr594 carries the post-translational modification Phosphothreonine. Ser598 is subject to Phosphoserine.

Belongs to the sodium:neurotransmitter symporter (SNF) (TC 2.A.22) family. SLC6A13 subfamily.

The protein resides in the cell membrane. It is found in the basolateral cell membrane. It catalyses the reaction 4-aminobutanoate(out) + chloride(out) + 2 Na(+)(out) = 4-aminobutanoate(in) + chloride(in) + 2 Na(+)(in). The catalysed reaction is taurine(out) + chloride(out) + 2 Na(+)(out) = taurine(in) + chloride(in) + 2 Na(+)(in). The enzyme catalyses beta-alanine(out) + chloride(out) + 2 Na(+)(out) = beta-alanine(in) + chloride(in) + 2 Na(+)(in). It carries out the reaction hypotaurine(out) + chloride(out) + 2 Na(+)(out) = hypotaurine(in) + chloride(in) + 2 Na(+)(in). Its function is as follows. Mediates sodium- and chloride-dependent transport of gamma-aminobutyric acid (GABA). Can also mediate transport of beta-alanine, taurine and hypotaurine. The protein is Sodium- and chloride-dependent GABA transporter 2 (SLC6A13) of Macaca fascicularis (Crab-eating macaque).